We begin with the raw amino-acid sequence, 396 residues long: Elongation factor Tu (396 aa).

In terms of domain architecture, tr-type G spans 10–205 (KTHANIGTIG…AVDDYIPTPE (196 aa)). Positions 19–26 (GHVDHGKT) are G1. 19–26 (GHVDHGKT) provides a ligand contact to GTP. A Mg(2+)-binding site is contributed by Thr-26. The G2 stretch occupies residues 61–65 (GITIS). The tract at residues 82-85 (DCPG) is G3. Residues 82–86 (DCPGH) and 137–140 (NKCD) each bind GTP. The tract at residues 137-140 (NKCD) is G4. Positions 175–177 (SAL) are G5.

It belongs to the TRAFAC class translation factor GTPase superfamily. Classic translation factor GTPase family. EF-Tu/EF-1A subfamily. As to quaternary structure, monomer.

The protein localises to the cytoplasm. It carries out the reaction GTP + H2O = GDP + phosphate + H(+). Functionally, GTP hydrolase that promotes the GTP-dependent binding of aminoacyl-tRNA to the A-site of ribosomes during protein biosynthesis. This Halalkalibacterium halodurans (strain ATCC BAA-125 / DSM 18197 / FERM 7344 / JCM 9153 / C-125) (Bacillus halodurans) protein is Elongation factor Tu.